We begin with the raw amino-acid sequence, 200 residues long: Peptidyl-tRNA hydrolase (200 aa).

Position 15 (Y15) interacts with tRNA. Catalysis depends on H20, which acts as the Proton acceptor. The tRNA site is built by Y66, N68, and N114.

The protein belongs to the PTH family. In terms of assembly, monomer.

The protein localises to the cytoplasm. It catalyses the reaction an N-acyl-L-alpha-aminoacyl-tRNA + H2O = an N-acyl-L-amino acid + a tRNA + H(+). In terms of biological role, hydrolyzes ribosome-free peptidyl-tRNAs (with 1 or more amino acids incorporated), which drop off the ribosome during protein synthesis, or as a result of ribosome stalling. Its function is as follows. Catalyzes the release of premature peptidyl moieties from peptidyl-tRNA molecules trapped in stalled 50S ribosomal subunits, and thus maintains levels of free tRNAs and 50S ribosomes. This chain is Peptidyl-tRNA hydrolase, found in Paraburkholderia xenovorans (strain LB400).